A 127-amino-acid polypeptide reads, in one-letter code: Translation initiation factor 5A (127 aa).

Lys35 is modified (hypusine).

This sequence belongs to the eIF-5A family.

It is found in the cytoplasm. In terms of biological role, functions by promoting the formation of the first peptide bond. In Methanococcoides burtonii (strain DSM 6242 / NBRC 107633 / OCM 468 / ACE-M), this protein is Translation initiation factor 5A.